The following is a 732-amino-acid chain: Eukaryotic translation initiation factor 3 subunit B (732 aa).

The sufficient for interaction with HCR1 and TIF32 stretch occupies residues 1–94 (MTTLESLKIE…LFIEMESVSA (94 aa)). The segment at 1–219 (MTTLESLKIE…GVTSWGGPNF (219 aa)) is sufficient for interaction with PIC8. Positions 37-120 (NFLVVDGAPV…HRLLVNSLND (84 aa)) constitute an RRM domain. WD repeat units follow at residues 185 to 224 (ARKN…RLKR), 237 to 280 (PTEK…LMKT), 439 to 481 (EMKD…KFFA), and 507 to 554 (VDQQ…KTLN).

This sequence belongs to the eIF-3 subunit B family. Component of the eukaryotic translation initiation factor 3 (eIF-3) complex.

The protein resides in the cytoplasm. RNA-binding component of the eukaryotic translation initiation factor 3 (eIF-3) complex, which is involved in protein synthesis of a specialized repertoire of mRNAs and, together with other initiation factors, stimulates binding of mRNA and methionyl-tRNAi to the 40S ribosome. The eIF-3 complex specifically targets and initiates translation of a subset of mRNAs involved in cell proliferation. The chain is Eukaryotic translation initiation factor 3 subunit B from Kluyveromyces lactis (strain ATCC 8585 / CBS 2359 / DSM 70799 / NBRC 1267 / NRRL Y-1140 / WM37) (Yeast).